The following is a 381-amino-acid chain: Succinyl-diaminopimelate desuccinylase (381 aa).

His71 provides a ligand contact to Zn(2+). Asp73 is an active-site residue. Asp104 is a binding site for Zn(2+). The active-site Proton acceptor is the Glu138. Residues Glu139, Glu167, and His353 each contribute to the Zn(2+) site.

The protein belongs to the peptidase M20A family. DapE subfamily. As to quaternary structure, homodimer. Zn(2+) is required as a cofactor. It depends on Co(2+) as a cofactor.

The enzyme catalyses N-succinyl-(2S,6S)-2,6-diaminopimelate + H2O = (2S,6S)-2,6-diaminopimelate + succinate. The protein operates within amino-acid biosynthesis; L-lysine biosynthesis via DAP pathway; LL-2,6-diaminopimelate from (S)-tetrahydrodipicolinate (succinylase route): step 3/3. Its function is as follows. Catalyzes the hydrolysis of N-succinyl-L,L-diaminopimelic acid (SDAP), forming succinate and LL-2,6-diaminopimelate (DAP), an intermediate involved in the bacterial biosynthesis of lysine and meso-diaminopimelic acid, an essential component of bacterial cell walls. In Shewanella pealeana (strain ATCC 700345 / ANG-SQ1), this protein is Succinyl-diaminopimelate desuccinylase.